Here is a 158-residue protein sequence, read N- to C-terminus: Scytalone dehydratase-like protein CPUR_05428 (158 aa).

Positions 24 and 44 each coordinate substrate. Catalysis depends on residues histidine 79 and histidine 104.

The protein belongs to the scytalone dehydratase family.

It functions in the pathway pigment biosynthesis. In terms of biological role, scytalone dehydratase-like protein; part of the ergochrome gene cluster responsible for the typical purple-black color of the ergot sclerotia. The ergochrome gene cluster produces several ergot pigments including the yellow ergochrome secalonic acid and its derivatives, as well as the red anthraquinones endocrocin and clavorubin. The pathway begins with the synthesis of atrochrysone thioester by the polyketide synthase (PKS) CPUR_05437. The atrochrysone carboxyl ACP thioesterase CPUR_05436 then breaks the thioester bond and releases the atrochrysone carboxylic acid from CPUR_05437. The atrochrysone carboxylic acid is then converted to atrochrysone which is further transformed into emodin anthrone. The next step is performed by the anthrone oxygenase CPUR_05434 that catalyzes the oxidation of emodinanthrone to emodin. Emodin is further modified to yield monodictyphenone via several steps involving CPUR_05427, CPUR_05428, CPUR_05429 and CPUR_05430. The short chain dehydrogenase/reductase CPUR_05418 then catalyzes the C-5 ketoreduction to give the xanthone skeleton of the monomeric units. Ergochromes formation requires further dimerization steps of different xanthone units, probably catalyzed by the cytochrome P450 monooxygenase CPUR_05419. CPUR_05425, CPUR_05426 and CPUR_05431 are unique to Claviceps, thus it is likely that they are involved in further modification of xanthone units or in their dimerization. The yellow ergochromes and the red anthraquinone pigments endocrocin and clavorubin are products from the same PKS derived precursors and the latter are likely shunt products in the pathway of xanthone biosynthesis. It is proposed that atrochrysone carboxylic acid released from the PKS CPUR_05437 can also be converted to endocrocin anthrone which is further oxidized into endocrocin by CPUR_05435. Endocrocin could be then modified to clavorubin, possibly by CPUR_05423 and CPUR_05431. Clavorubin is the principal anthraquinone metabolite produced by the cluster with a much higher yield compared to endocrocin. In Claviceps purpurea (strain 20.1) (Ergot fungus), this protein is Scytalone dehydratase-like protein CPUR_05428.